The following is a 111-amino-acid chain: Viscotoxin-A3 (111 aa).

Residues 1-26 (MEVVRGSSLVLLVLLLGALLVSQVES) form the signal peptide. Disulfide bonds link Cys-29–Cys-66, Cys-30–Cys-58, and Cys-42–Cys-52. A propeptide spans 73–111 (FYCTLGCESSQCATNSNGDAEAVRCKTACSDLCQDVDDA) (acidic domain).

Belongs to the plant thionin (TC 1.C.44) family.

It is found in the secreted. Its function is as follows. Thionins are small plant proteins which are toxic to animal cells. They seem to exert their toxic effect at the level of the cell membrane. Their precise function is not known. The chain is Viscotoxin-A3 (THI2.1) from Viscum album (European mistletoe).